The following is a 128-amino-acid chain: Small ribosomal subunit protein uS12 (128 aa).

Asp-89 is modified (3-methylthioaspartic acid). Residues 101–128 (SLDTSGVADRRQGRSKYGAKRPKGAAAK) form a disordered region. Over residues 113–128 (GRSKYGAKRPKGAAAK) the composition is skewed to basic residues.

It belongs to the universal ribosomal protein uS12 family. In terms of assembly, part of the 30S ribosomal subunit. Contacts proteins S8 and S17. May interact with IF1 in the 30S initiation complex.

With S4 and S5 plays an important role in translational accuracy. Functionally, interacts with and stabilizes bases of the 16S rRNA that are involved in tRNA selection in the A site and with the mRNA backbone. Located at the interface of the 30S and 50S subunits, it traverses the body of the 30S subunit contacting proteins on the other side and probably holding the rRNA structure together. The combined cluster of proteins S8, S12 and S17 appears to hold together the shoulder and platform of the 30S subunit. The sequence is that of Small ribosomal subunit protein uS12 from Prosthecochloris aestuarii (strain DSM 271 / SK 413).